The chain runs to 196 residues: Protein GrpE (196 aa).

Residues M1–P39 form a disordered region.

It belongs to the GrpE family. In terms of assembly, homodimer.

The protein resides in the cytoplasm. Its function is as follows. Participates actively in the response to hyperosmotic and heat shock by preventing the aggregation of stress-denatured proteins, in association with DnaK and GrpE. It is the nucleotide exchange factor for DnaK and may function as a thermosensor. Unfolded proteins bind initially to DnaJ; upon interaction with the DnaJ-bound protein, DnaK hydrolyzes its bound ATP, resulting in the formation of a stable complex. GrpE releases ADP from DnaK; ATP binding to DnaK triggers the release of the substrate protein, thus completing the reaction cycle. Several rounds of ATP-dependent interactions between DnaJ, DnaK and GrpE are required for fully efficient folding. The protein is Protein GrpE of Escherichia coli O139:H28 (strain E24377A / ETEC).